The primary structure comprises 174 residues: Actin-related protein 2/3 complex subunit 3 (174 aa).

This sequence belongs to the ARPC3 family. Component of the Arp2/3 complex composed of arp2, act2, arc1/p41-ARC, arc2/p34-ARC, arc3/p21-ARC, arc4/p20-ARC and arc5/p16-ARC.

Its subcellular location is the cytoplasm. It is found in the cytoskeleton. The protein resides in the actin patch. Functions as a component of the Arp2/3 complex which is involved in regulation of actin polymerization and together with an activating nucleation-promoting factor (NPF) mediates the formation of branched actin networks. The sequence is that of Actin-related protein 2/3 complex subunit 3 (arc3) from Schizosaccharomyces pombe (strain 972 / ATCC 24843) (Fission yeast).